Here is a 556-residue protein sequence, read N- to C-terminus: Arginine--tRNA ligase (556 aa).

The 'HIGH' region motif lies at 132-142; sequence ANPTGDLHLGH.

Belongs to the class-I aminoacyl-tRNA synthetase family. In terms of assembly, monomer.

The protein resides in the cytoplasm. The enzyme catalyses tRNA(Arg) + L-arginine + ATP = L-arginyl-tRNA(Arg) + AMP + diphosphate. This is Arginine--tRNA ligase from Shouchella clausii (strain KSM-K16) (Alkalihalobacillus clausii).